Here is a 91-residue protein sequence, read N- to C-terminus: AIDCKTVDSALLPCVPYLTGGGTPTTDCCKKGVTTIKDISVTTQQKDACNCVKAAANRYPTLKDEVARALPDMCKVKLDIPISRTTNCDAI.

Cystine bridges form between Cys-4–Cys-51, Cys-14–Cys-28, Cys-29–Cys-74, and Cys-49–Cys-88.

In terms of tissue distribution, detected in seeds (at protein level).

Its function is as follows. Plant non-specific lipid-transfer proteins transfer phospholipids as well as galactolipids across membranes. May play a role in wax or cutin deposition in the cell walls of expanding epidermal cells and certain secretory tissues. The sequence is that of Non-specific lipid-transfer protein 1 from Trachyspermum ammi (Ajowan caraway).